A 321-amino-acid chain; its full sequence is Glutaminase (321 aa).

7 residues coordinate substrate: Ser69, Asn120, Glu165, Asn172, Tyr196, Tyr248, and Val266.

This sequence belongs to the glutaminase family. As to quaternary structure, homotetramer.

It catalyses the reaction L-glutamine + H2O = L-glutamate + NH4(+). In Bacteroides thetaiotaomicron (strain ATCC 29148 / DSM 2079 / JCM 5827 / CCUG 10774 / NCTC 10582 / VPI-5482 / E50), this protein is Glutaminase.